Consider the following 465-residue polypeptide: Ribulose bisphosphate carboxylase large chain (465 aa).

Lys-4 carries the post-translational modification N6,N6,N6-trimethyllysine. Residues Asn-113 and Thr-163 each contribute to the substrate site. Lys-165 serves as the catalytic Proton acceptor. Lys-167 serves as a coordination point for substrate. Residues Lys-191, Asp-193, and Glu-194 each coordinate Mg(2+). Residue Lys-191 is modified to N6-carboxylysine. His-284 serves as the catalytic Proton acceptor. Positions 285, 317, and 369 each coordinate substrate.

This sequence belongs to the RuBisCO large chain family. Type I subfamily. In terms of assembly, heterohexadecamer of 8 large chains and 8 small chains; disulfide-linked. The disulfide link is formed within the large subunit homodimers. Mg(2+) serves as cofactor. The disulfide bond which can form in the large chain dimeric partners within the hexadecamer appears to be associated with oxidative stress and protein turnover.

It is found in the plastid. The protein resides in the chloroplast. It carries out the reaction 2 (2R)-3-phosphoglycerate + 2 H(+) = D-ribulose 1,5-bisphosphate + CO2 + H2O. It catalyses the reaction D-ribulose 1,5-bisphosphate + O2 = 2-phosphoglycolate + (2R)-3-phosphoglycerate + 2 H(+). RuBisCO catalyzes two reactions: the carboxylation of D-ribulose 1,5-bisphosphate, the primary event in carbon dioxide fixation, as well as the oxidative fragmentation of the pentose substrate in the photorespiration process. Both reactions occur simultaneously and in competition at the same active site. The protein is Ribulose bisphosphate carboxylase large chain of Dillenia indica (Elephant apple).